We begin with the raw amino-acid sequence, 1248 residues long: Actin cytoskeleton-regulatory complex protein PAN1 (1248 aa).

The EH 1 domain maps to 93–182; that stretch reads DQAKFETLFR…SKVKNEVSSF (90 aa). Positions 126–161 constitute an EF-hand 1 domain; that stretch reads LSPFQLGLIWTLCDTNNAGELLFPEFALAMHLVNGV. The segment at 313–337 is disordered; the sequence is ANPLLSQLTGGQGFQQQRQPTGANS. The span at 316 to 337 shows a compositional bias: polar residues; the sequence is LLSQLTGGQGFQQQRQPTGANS. 2 EF-hand domains span residues 426–449 and 460–495; these read EEKS…LHFK and LNRS…IYRR. Residues 427 to 516 enclose the EH 2 domain; the sequence is EKSLFYNIFD…PSLVPSSTRI (90 aa). Positions 473, 475, 477, 479, and 484 each coordinate Ca(2+). A disordered region spans residues 548–575; the sequence is DILPSFKNRRKTFTEPRQSKDNKTVDDL. The span at 559–575 shows a compositional bias: basic and acidic residues; sequence TFTEPRQSKDNKTVDDL. Coiled coils occupy residues 566 to 601, 713 to 746, and 787 to 879; these read SKDN…KDQQ, SEAD…NDIK, and DFIR…ASRE. Residues 800 to 817 show a composition bias toward low complexity; sequence QAQEQARAQEQARAQEQA. The tract at residues 800-1248 is disordered; it reads QAQEQARAQE…PYIPPPPPLP (449 aa). Basic and acidic residues predominate over residues 818 to 833; it reads RAQEKARAQEKARAQE. Low complexity predominate over residues 834 to 868; it reads QARVQEQARAQEQARAQEQARAQEQARAQEQARAQ. Residues 869 to 888 are compositionally biased toward basic and acidic residues; that stretch reads EQAKADAASRESTRSPEEFA. Positions 904 to 915 are enriched in low complexity; the sequence is SVSPQSQSVSVS. 2 stretches are compositionally biased toward polar residues: residues 916–928 and 946–964; these read NRGT…QQMG and RQQS…TTDF. Residues 965 to 974 show a composition bias toward acidic residues; it reads NSEDEEDEEE. Residues 965–997 adopt a coiled-coil conformation; sequence NSEDEEDEEERSLREQLAALKLKRKAEKEAKLA. Residues 1023–1037 are compositionally biased toward polar residues; sequence SRPSHTPVYSTSPAM. Residues 1078–1091 show a composition bias toward basic and acidic residues; that stretch reads KAAEQQRRLQRGLD. Residues 1092–1101 show a composition bias toward acidic residues; it reads DGDGWSDDED. The segment covering 1105–1123 has biased composition (polar residues); it reads KPTQPTATTSATDIPSSGA. 2 stretches are compositionally biased toward pro residues: residues 1150–1161 and 1239–1248; these read PVVPSPPVPQPG and PYIPPPPPLP.

This sequence belongs to the PAN1 family. As to quaternary structure, component of the PAN1 actin cytoskeleton-regulatory complex.

It localises to the cell membrane. The protein resides in the endosome membrane. The protein localises to the cytoplasm. It is found in the cytoskeleton. Its subcellular location is the actin patch. Component of the PAN1 actin cytoskeleton-regulatory complex required for the internalization of endosomes during actin-coupled endocytosis. The complex links the site of endocytosis to the cell membrane-associated actin cytoskeleton. Mediates uptake of external molecules and vacuolar degradation of plasma membrane proteins. Plays a role in the proper organization of the cell membrane-associated actin cytoskeleton and promotes its destabilization. The chain is Actin cytoskeleton-regulatory complex protein PAN1 (PAN1) from Eremothecium gossypii (strain ATCC 10895 / CBS 109.51 / FGSC 9923 / NRRL Y-1056) (Yeast).